We begin with the raw amino-acid sequence, 1183 residues long: DNA-directed RNA polymerase subunit beta (1183 aa).

The protein belongs to the RNA polymerase beta chain family. In terms of assembly, the RNAP catalytic core consists of 2 alpha, 1 beta, 1 beta' and 1 omega subunit. When a sigma factor is associated with the core the holoenzyme is formed, which can initiate transcription.

It carries out the reaction RNA(n) + a ribonucleoside 5'-triphosphate = RNA(n+1) + diphosphate. In terms of biological role, DNA-dependent RNA polymerase catalyzes the transcription of DNA into RNA using the four ribonucleoside triphosphates as substrates. The sequence is that of DNA-directed RNA polymerase subunit beta from Staphylococcus aureus (strain MRSA252).